A 657-amino-acid polypeptide reads, in one-letter code: Katanin p80 WD40 repeat-containing subunit B1 (657 aa).

6 WD repeats span residues 18–58 (AHSS…CVMS), 61–100 (GHTT…ILRT), 103–142 (GHKA…CIFK), 145–184 (SHTQ…VMFE), 187–226 (GHSG…VVSC), and 229–269 (EEAT…DVVV). 2 disordered regions span residues 318–410 (NNEL…EDEP) and 423–454 (VEVQ…RAEP). The span at 325-345 (PTPTGSSLRRSYDRPSTSCSK) shows a compositional bias: polar residues. Residues 351-385 (HSSESERRSPSSEEDRDEKESKAEIQNPEDYKEIF) show a composition bias toward basic and acidic residues.

This sequence belongs to the WD repeat KATNB1 family. As to quaternary structure, interacts with KATNA1. This interaction enhances the microtubule binding and severing activity of KATNA1 and also targets this activity to the centrosome.

It localises to the cytoplasm. The protein resides in the cytoskeleton. Its subcellular location is the microtubule organizing center. The protein localises to the centrosome. It is found in the spindle pole. It localises to the spindle. Functionally, participates in a complex which severs microtubules in an ATP-dependent manner. May act to target the enzymatic subunit of this complex to sites of action such as the centrosome. Microtubule severing may promote rapid reorganization of cellular microtubule arrays and the release of microtubules from the centrosome following nucleation. This Gallus gallus (Chicken) protein is Katanin p80 WD40 repeat-containing subunit B1.